Reading from the N-terminus, the 134-residue chain is Ribonuclease VapC40 (134 aa).

Positions 3–126 constitute a PINc domain; that stretch reads APDTSVLVAG…LRAVETYERL (124 aa). Mg(2+)-binding residues include Asp-5 and Asp-98.

The protein belongs to the PINc/VapC protein family. Mg(2+) serves as cofactor.

Its function is as follows. Toxic component of a type II toxin-antitoxin (TA) system. An RNase. Its cognate antitoxin is VapB40. This chain is Ribonuclease VapC40, found in Mycobacterium tuberculosis (strain CDC 1551 / Oshkosh).